We begin with the raw amino-acid sequence, 408 residues long: Putative agmatinase 3 (408 aa).

An N-terminal signal peptide occupies residues 1–21 (MKSVEWFTWGVFLLLSGFGEA). H198, D222, H224, D226, D319, and D321 together coordinate Mn(2+).

It belongs to the arginase family. Mn(2+) is required as a cofactor.

It catalyses the reaction agmatine + H2O = urea + putrescine. This chain is Putative agmatinase 3, found in Schizosaccharomyces pombe (strain 972 / ATCC 24843) (Fission yeast).